The primary structure comprises 258 residues: MKITKIEKKKRLYTLELDNTENLYITEDTIVHFMLSKGMIVNAEKLENIKKFAQLSYGKNLGLYYISFKQRTEKELIKYLQQHDIDSKIIPQIIDNLKSENWINDKNYVQSFIQQNLNTGDKGPYVIKQKLLQKGIKSKIIESELQAINFQDLASKISQKLYKKYQNKLPLKALKDKLMQSLTTKGFDYQIAHTVIQNLEIEKDQELEEDLIYKELDKQYQKFSKKYDQYELKQRIINALMRKGYQYEDIKSALREYL.

This sequence belongs to the RecX family.

Its subcellular location is the cytoplasm. Modulates RecA activity. In Streptococcus agalactiae serotype Ia (strain ATCC 27591 / A909 / CDC SS700), this protein is Regulatory protein RecX.